Here is a 448-residue protein sequence, read N- to C-terminus: tRNA wybutosine-synthesizing protein 2 homolog (448 aa).

S-adenosyl-L-methionine is bound by residues Ser-218, Lys-225, Glu-265, and 293-294; that span reads DN.

Belongs to the class I-like SAM-binding methyltransferase superfamily. TRM5/TYW2 family.

The catalysed reaction is 4-demethylwyosine(37) in tRNA(Phe) + S-adenosyl-L-methionine = 4-demethyl-7-[(3S)-3-amino-3-carboxypropyl]wyosine(37) in tRNA(Phe) + S-methyl-5'-thioadenosine + H(+). It participates in tRNA modification; wybutosine-tRNA(Phe) biosynthesis. Its function is as follows. S-adenosyl-L-methionine-dependent transferase that acts as a component of the wybutosine biosynthesis pathway. Wybutosine is a hyper modified guanosine with a tricyclic base found at the 3'-position adjacent to the anticodon of eukaryotic phenylalanine tRNA. Catalyzes the transfer of the alpha-amino-alpha-carboxypropyl (acp) group from S-adenosyl-L-methionine to the C-7 position of 4-demethylwyosine (imG-14) to produce wybutosine-86. In Macaca fascicularis (Crab-eating macaque), this protein is tRNA wybutosine-synthesizing protein 2 homolog (TRMT12).